The primary structure comprises 127 residues: Large ribosomal subunit protein uL22 (127 aa).

Belongs to the universal ribosomal protein uL22 family. As to quaternary structure, part of the 50S ribosomal subunit.

In terms of biological role, this protein binds specifically to 23S rRNA; its binding is stimulated by other ribosomal proteins, e.g. L4, L17, and L20. It is important during the early stages of 50S assembly. It makes multiple contacts with different domains of the 23S rRNA in the assembled 50S subunit and ribosome. Its function is as follows. The globular domain of the protein is located near the polypeptide exit tunnel on the outside of the subunit, while an extended beta-hairpin is found that lines the wall of the exit tunnel in the center of the 70S ribosome. The protein is Large ribosomal subunit protein uL22 of Methylobacterium sp. (strain 4-46).